We begin with the raw amino-acid sequence, 82 residues long: ATP synthase subunit c (82 aa).

2 consecutive transmembrane segments (helical) span residues 7–27 (AASVVAAGLAVGLGAIGPGIG) and 57–77 (FAFMESLTIYGLVVALVLLFA).

This sequence belongs to the ATPase C chain family. As to quaternary structure, F-type ATPases have 2 components, F(1) - the catalytic core - and F(0) - the membrane proton channel. F(1) has five subunits: alpha(3), beta(3), gamma(1), delta(1), epsilon(1). F(0) has four main subunits: a(1), b(1), b'(1) and c(10-14). The alpha and beta chains form an alternating ring which encloses part of the gamma chain. F(1) is attached to F(0) by a central stalk formed by the gamma and epsilon chains, while a peripheral stalk is formed by the delta, b and b' chains.

The protein localises to the cellular thylakoid membrane. Its function is as follows. F(1)F(0) ATP synthase produces ATP from ADP in the presence of a proton or sodium gradient. F-type ATPases consist of two structural domains, F(1) containing the extramembraneous catalytic core and F(0) containing the membrane proton channel, linked together by a central stalk and a peripheral stalk. During catalysis, ATP synthesis in the catalytic domain of F(1) is coupled via a rotary mechanism of the central stalk subunits to proton translocation. Functionally, key component of the F(0) channel; it plays a direct role in translocation across the membrane. A homomeric c-ring of between 10-14 subunits forms the central stalk rotor element with the F(1) delta and epsilon subunits. This is ATP synthase subunit c from Prochlorococcus marinus (strain MIT 9303).